Consider the following 249-residue polypeptide: Diaminopimelate epimerase (249 aa).

Residues asparagine 11 and asparagine 60 each coordinate substrate. The active-site Proton donor is cysteine 69. Substrate contacts are provided by residues 70 to 71 (GN), asparagine 164, and 182 to 183 (ER). Residue cysteine 192 is the Proton acceptor of the active site. Substrate is bound at residue 193–194 (GT).

This sequence belongs to the diaminopimelate epimerase family. Homodimer.

The protein resides in the cytoplasm. The catalysed reaction is (2S,6S)-2,6-diaminopimelate = meso-2,6-diaminopimelate. Its pathway is amino-acid biosynthesis; L-lysine biosynthesis via DAP pathway; DL-2,6-diaminopimelate from LL-2,6-diaminopimelate: step 1/1. In terms of biological role, catalyzes the stereoinversion of LL-2,6-diaminopimelate (L,L-DAP) to meso-diaminopimelate (meso-DAP), a precursor of L-lysine and an essential component of the bacterial peptidoglycan. The sequence is that of Diaminopimelate epimerase from Campylobacter jejuni subsp. jejuni serotype O:2 (strain ATCC 700819 / NCTC 11168).